A 252-amino-acid polypeptide reads, in one-letter code: Phosphoribosylformylglycinamidine synthase subunit PurQ (252 aa).

Positions 6–237 (VGVVVFPGSN…FAHLAGTKRS (232 aa)) constitute a Glutamine amidotransferase type-1 domain. C89 functions as the Nucleophile in the catalytic mechanism. Residues H206 and E208 contribute to the active site.

Part of the FGAM synthase complex composed of 1 PurL, 1 PurQ and 2 PurS subunits.

It localises to the cytoplasm. The enzyme catalyses N(2)-formyl-N(1)-(5-phospho-beta-D-ribosyl)glycinamide + L-glutamine + ATP + H2O = 2-formamido-N(1)-(5-O-phospho-beta-D-ribosyl)acetamidine + L-glutamate + ADP + phosphate + H(+). The catalysed reaction is L-glutamine + H2O = L-glutamate + NH4(+). It functions in the pathway purine metabolism; IMP biosynthesis via de novo pathway; 5-amino-1-(5-phospho-D-ribosyl)imidazole from N(2)-formyl-N(1)-(5-phospho-D-ribosyl)glycinamide: step 1/2. Part of the phosphoribosylformylglycinamidine synthase complex involved in the purines biosynthetic pathway. Catalyzes the ATP-dependent conversion of formylglycinamide ribonucleotide (FGAR) and glutamine to yield formylglycinamidine ribonucleotide (FGAM) and glutamate. The FGAM synthase complex is composed of three subunits. PurQ produces an ammonia molecule by converting glutamine to glutamate. PurL transfers the ammonia molecule to FGAR to form FGAM in an ATP-dependent manner. PurS interacts with PurQ and PurL and is thought to assist in the transfer of the ammonia molecule from PurQ to PurL. This Chlorobaculum parvum (strain DSM 263 / NCIMB 8327) (Chlorobium vibrioforme subsp. thiosulfatophilum) protein is Phosphoribosylformylglycinamidine synthase subunit PurQ.